A 263-amino-acid polypeptide reads, in one-letter code: L-histidine 2-aminobutanoyltransferase (263 aa).

Belongs to the methyltransferase superfamily. CntL family. As to quaternary structure, interacts with CntM.

The enzyme catalyses L-histidine + S-adenosyl-L-methionine = (2S)-2-amino-4-{[(1S)-1-carboxy-2-(1H-imidazol-4-yl)ethyl]amino}butanoate + S-methyl-5'-thioadenosine + H(+). Catalyzes the nucleophilic attack of one alpha-aminobutanoate moiety from SAM onto L-histidine to produce the intermediate (2S)-2-amino-4-{[(1S)-1-carboxy-2-(1H-imidazol-4-yl)ethyl]amino}butanoate. Functions in the biosynthesis of the metallophore pseudopaline, which is involved in the acquisition of nickel and zinc, and thus enables bacterial growth inside the host, where metal access is limited. Therefore, this enzyme probably contributes to Pseudomonas virulence. Cannot use D-histidine in place of L-histidine as substrate. This Pseudomonas aeruginosa (strain UCBPP-PA14) protein is L-histidine 2-aminobutanoyltransferase.